The chain runs to 370 residues: Succinoglycan biosynthesis protein ExoH (370 aa).

The next 10 helical transmembrane spans lie at 14 to 34 (ILLISGIVFVHVPYNPQWSPF), 46 to 66 (VFLGESLFRIGVPCLSAISGY), 88 to 108 (TVLLPFLIWSGSFFVVVYAIQ), 144 to 164 (LYFLRDLMLCILLSPLLALLV), 170 to 190 (VTLLALLAYAILPLPNGIFLK), 193 to 213 (ILFGFSAGIYASLHGVNIKML), 216 to 236 (FAAPIAAGFLAIAVVIAVGLY), 244 to 264 (LWLDMALRLTSIAGIIGSWAI), 282 to 302 (GLSFWIFCGHYPLLVLFWMIW), and 307 to 327 (LSYYPLFYFTAPFIAIAILVA). Residues 350–370 (AKRMATQPPQGAQAGYSPQQR) form a disordered region.

This sequence belongs to the acyltransferase 3 family.

The protein localises to the cell membrane. The protein operates within glycan metabolism; exopolysaccharide biosynthesis. Functionally, required for the succinyl modification of the seventh sugar (glucose) of the octasaccharide subunit of succinoglycan (EPS I). The protein is Succinoglycan biosynthesis protein ExoH (exoH) of Rhizobium meliloti (strain 1021) (Ensifer meliloti).